We begin with the raw amino-acid sequence, 229 residues long: Protein ras-2 (229 aa).

Residue 15–22 (GDGGVGKT) coordinates GTP. The short motif at 37 to 45 (YDPTIEDSY) is the Effector region element. 62–66 (DTAGQ) is a binding site for GTP. A disordered region spans residues 109-132 (KESTSSPSAYPGSSPLAATNPSAP). Positions 111-126 (STSSPSAYPGSSPLAA) are enriched in low complexity. 140–143 (NKSD) lines the GTP pocket. The disordered stretch occupies residues 188–229 (LRKQRQQGQSTPRALPPSGNSKSEKYSGTEKPKRPRGKCLII). Positions 209 to 219 (KSEKYSGTEKP) are enriched in basic and acidic residues. Positions 220–229 (KRPRGKCLII) are enriched in basic residues. Cys-226 carries the cysteine methyl ester modification. Cys-226 carries S-farnesyl cysteine lipidation. Residues 227–229 (LII) constitute a propeptide, removed in mature form.

Belongs to the small GTPase superfamily. Ras family.

It is found in the cell membrane. The catalysed reaction is GTP + H2O = GDP + phosphate + H(+). Its function is as follows. Ras proteins bind GDP/GTP and possess intrinsic GTPase activity. This chain is Protein ras-2 (ras-2), found in Neurospora crassa (strain ATCC 24698 / 74-OR23-1A / CBS 708.71 / DSM 1257 / FGSC 987).